Reading from the N-terminus, the 387-residue chain is Succinate--CoA ligase [ADP-forming] subunit beta (387 aa).

The ATP-grasp domain occupies 9–245 (KDLLESYGLK…KSQENAKELK (237 aa)). Residues K46, 53 to 55 (GRG), E100, Y103, and E108 contribute to the ATP site. 2 residues coordinate Mg(2+): N200 and D214. Substrate contacts are provided by residues N265 and 322-324 (GIV).

The protein belongs to the succinate/malate CoA ligase beta subunit family. Heterotetramer of two alpha and two beta subunits. Mg(2+) serves as cofactor.

The catalysed reaction is succinate + ATP + CoA = succinyl-CoA + ADP + phosphate. It catalyses the reaction GTP + succinate + CoA = succinyl-CoA + GDP + phosphate. The protein operates within carbohydrate metabolism; tricarboxylic acid cycle; succinate from succinyl-CoA (ligase route): step 1/1. Functionally, succinyl-CoA synthetase functions in the citric acid cycle (TCA), coupling the hydrolysis of succinyl-CoA to the synthesis of either ATP or GTP and thus represents the only step of substrate-level phosphorylation in the TCA. The beta subunit provides nucleotide specificity of the enzyme and binds the substrate succinate, while the binding sites for coenzyme A and phosphate are found in the alpha subunit. This is Succinate--CoA ligase [ADP-forming] subunit beta from Francisella tularensis subsp. tularensis (strain FSC 198).